The primary structure comprises 297 residues: Phosphoribosylaminoimidazole-succinocarboxamide synthase (297 aa).

It belongs to the SAICAR synthetase family.

The catalysed reaction is 5-amino-1-(5-phospho-D-ribosyl)imidazole-4-carboxylate + L-aspartate + ATP = (2S)-2-[5-amino-1-(5-phospho-beta-D-ribosyl)imidazole-4-carboxamido]succinate + ADP + phosphate + 2 H(+). It participates in purine metabolism; IMP biosynthesis via de novo pathway; 5-amino-1-(5-phospho-D-ribosyl)imidazole-4-carboxamide from 5-amino-1-(5-phospho-D-ribosyl)imidazole-4-carboxylate: step 1/2. The sequence is that of Phosphoribosylaminoimidazole-succinocarboxamide synthase from Mycobacterium sp. (strain JLS).